The chain runs to 289 residues: MGFADFFKTFTRERAKEGESPSHWIKCPSCSALMYYKEVIAQHHVCPKCNFHMRIALEDRIEMLCDEGTLIEHDASLEPTDPLTFVDKKSYKKRIEEGKQKTGRASSVLSGECRINGVSTQIVLFNFAFMGGSLGSVEGEKIVRAVNRALEKHQGLVILSTSGGARMQESTYSLMQMAKTSAALARLSQAKLPFISLLTDPTMGGVSASFAFLGDIIIAEPGAMVGFAGARVIKQTIGADLPEGFQTAEFLLEHGLIDMITPRKEMKKTLGDLLRFFNPYDENPCLLHL.

The region spanning 23–289 (HWIKCPSCSA…YDENPCLLHL (267 aa)) is the CoA carboxyltransferase N-terminal domain. Residues Cys-27, Cys-30, Cys-46, and Cys-49 each coordinate Zn(2+). A C4-type zinc finger spans residues 27 to 49 (CPSCSALMYYKEVIAQHHVCPKC).

The protein belongs to the AccD/PCCB family. As to quaternary structure, acetyl-CoA carboxylase is a heterohexamer composed of biotin carboxyl carrier protein (AccB), biotin carboxylase (AccC) and two subunits each of ACCase subunit alpha (AccA) and ACCase subunit beta (AccD). Zn(2+) is required as a cofactor.

It localises to the cytoplasm. It carries out the reaction N(6)-carboxybiotinyl-L-lysyl-[protein] + acetyl-CoA = N(6)-biotinyl-L-lysyl-[protein] + malonyl-CoA. It functions in the pathway lipid metabolism; malonyl-CoA biosynthesis; malonyl-CoA from acetyl-CoA: step 1/1. Functionally, component of the acetyl coenzyme A carboxylase (ACC) complex. Biotin carboxylase (BC) catalyzes the carboxylation of biotin on its carrier protein (BCCP) and then the CO(2) group is transferred by the transcarboxylase to acetyl-CoA to form malonyl-CoA. The sequence is that of Acetyl-coenzyme A carboxylase carboxyl transferase subunit beta from Wolinella succinogenes (strain ATCC 29543 / DSM 1740 / CCUG 13145 / JCM 31913 / LMG 7466 / NCTC 11488 / FDC 602W) (Vibrio succinogenes).